The chain runs to 365 residues: Peptide chain release factor 2 (365 aa).

Q252 carries the N5-methylglutamine modification.

This sequence belongs to the prokaryotic/mitochondrial release factor family. Methylated by PrmC. Methylation increases the termination efficiency of RF2.

The protein localises to the cytoplasm. In terms of biological role, peptide chain release factor 2 directs the termination of translation in response to the peptide chain termination codons UGA and UAA. The protein is Peptide chain release factor 2 of Yersinia enterocolitica serotype O:8 / biotype 1B (strain NCTC 13174 / 8081).